The primary structure comprises 407 residues: Imidazolonepropionase (407 aa).

Residues His-74 and His-76 each contribute to the Fe(3+) site. Residues His-74 and His-76 each coordinate Zn(2+). Residues Arg-83, Tyr-146, and His-179 each coordinate 4-imidazolone-5-propanoate. Tyr-146 contacts N-formimidoyl-L-glutamate. His-244 is a binding site for Fe(3+). A Zn(2+)-binding site is contributed by His-244. Residue Gln-247 coordinates 4-imidazolone-5-propanoate. Asp-319 is a binding site for Fe(3+). Residue Asp-319 participates in Zn(2+) binding. Asn-321 and Gly-323 together coordinate N-formimidoyl-L-glutamate. Thr-324 is a binding site for 4-imidazolone-5-propanoate.

The protein belongs to the metallo-dependent hydrolases superfamily. HutI family. Requires Zn(2+) as cofactor. The cofactor is Fe(3+).

The protein localises to the cytoplasm. The enzyme catalyses 4-imidazolone-5-propanoate + H2O = N-formimidoyl-L-glutamate. It functions in the pathway amino-acid degradation; L-histidine degradation into L-glutamate; N-formimidoyl-L-glutamate from L-histidine: step 3/3. Catalyzes the hydrolytic cleavage of the carbon-nitrogen bond in imidazolone-5-propanoate to yield N-formimidoyl-L-glutamate. It is the third step in the universal histidine degradation pathway. The sequence is that of Imidazolonepropionase from Salmonella heidelberg (strain SL476).